We begin with the raw amino-acid sequence, 336 residues long: ATP-dependent 6-phosphofructokinase 3 (336 aa).

ATP-binding positions include glycine 10, 72–73 (RE), and 108–111 (GNGT). Asparagine 109 contacts Mg(2+). Residues 131 to 133 (TID), arginine 168, 175 to 177 (MGH), glutamate 228, arginine 255, and 261 to 264 (YIQR) each bind substrate. Aspartate 133 acts as the Proton acceptor in catalysis.

This sequence belongs to the phosphofructokinase type A (PFKA) family. Mixed-substrate PFK group III subfamily. As to quaternary structure, homodimer or homotetramer. Mg(2+) is required as a cofactor.

It localises to the cytoplasm. It carries out the reaction beta-D-fructose 6-phosphate + ATP = beta-D-fructose 1,6-bisphosphate + ADP + H(+). Its pathway is carbohydrate degradation; glycolysis; D-glyceraldehyde 3-phosphate and glycerone phosphate from D-glucose: step 3/4. In terms of biological role, catalyzes the phosphorylation of D-fructose 6-phosphate to fructose 1,6-bisphosphate by ATP, the first committing step of glycolysis. The sequence is that of ATP-dependent 6-phosphofructokinase 3 from Bacteroides thetaiotaomicron (strain ATCC 29148 / DSM 2079 / JCM 5827 / CCUG 10774 / NCTC 10582 / VPI-5482 / E50).